The primary structure comprises 914 residues: Solute carrier family 12 member 9 (914 aa).

At 1-36 (MASESSPLLAYRLLGEEGVALPANGAGGPGGASARK) the chain is on the cytoplasmic side. The residue at position 6 (S6) is a Phosphoserine. A helical membrane pass occupies residues 37–57 (LSTFLGVVVPTVLSMFSIVVF). Residues 58-72 (LRIGFVVGHAGLLQA) lie on the Extracellular side of the membrane. Residues 73 to 93 (LAMLLVAYFILALTVLSVCAI) traverse the membrane as a helical segment. Topologically, residues 94–119 (ATNGAVQGGGAYFMISRTLGPEVGGS) are cytoplasmic. A helical membrane pass occupies residues 120–140 (IGLMFYLANVCGCAVSLLGLV). At 141–167 (ESVLDVFGADATGPSGLRVLPQGYGWN) the chain is on the extracellular side. Residues 168 to 188 (LLYGSLLLGLVGGVCTLGAGL) form a helical membrane-spanning segment. Residues 189-193 (YARAS) are Cytoplasmic-facing. A helical transmembrane segment spans residues 194–214 (FLTFLLVSGSLASVLISFVAV). Residues 215-262 (GPRDIRLTPRPGPNGSSLPPRFGHFTGFNSSTLKDNLGAGYAEDYTTG) lie on the Extracellular side of the membrane. Residues N228 and N243 are each glycosylated (N-linked (GlcNAc...) asparagine). The chain crosses the membrane as a helical span at residues 263–283 (AVMNFASVFAVLFNGCTGIMA). Residues 284–297 (GANMSGELKDPSRA) lie on the Cytoplasmic side of the membrane. Residues 298–318 (IPLGTIVAVAYTFFVYVLLFF) form a helical membrane-spanning segment. Topologically, residues 319-338 (LSSFTCDRTLLQEDYGFFRA) are extracellular. A helical transmembrane segment spans residues 339–359 (ISLWPPLVLIGIYATALSASM). Residues 360 to 390 (SSLIGASRILHALARDDLFGVILAPAKVVSR) lie on the Cytoplasmic side of the membrane. A helical membrane pass occupies residues 391–411 (GGNPWAAVLYSWGLVQLVLLA). Residues 412-416 (GKLNT) lie on the Extracellular side of the membrane. Residues 417 to 437 (LAAVVTVFYLVAYAAVDLSCL) traverse the membrane as a helical segment. Residues 438–466 (SLEWASAPNFRPTFSLFSWHTCLLGVASC) lie on the Cytoplasmic side of the membrane. Residues 467-487 (LLMMFLISPGAAGGSLLLMGL) traverse the membrane as a helical segment. At 488-740 (LAALLTARGG…LLRPRGGPGY (253 aa)) the chain is on the extracellular side. The disordered stretch occupies residues 642 to 678 (LTDPAFSEPADSTREGSSPALSTLFPPPRAPGSPRAL). The helical transmembrane segment at 741–761 (VDVCGLFLLQMATILGMVPAW) threads the bilayer. At 762-914 (HSARLRIFLC…GVTPVTCTDL (153 aa)) the chain is on the cytoplasmic side. The disordered stretch occupies residues 844-863 (QQGRGTGGGPGGPEGGDAEG). Over residues 847–858 (RGTGGGPGGPEG) the composition is skewed to gly residues.

It belongs to the SLC12A transporter family. Interacts with SLC12A1. In terms of tissue distribution, highly expressed in placenta, brain and kidney. Lower expression in lung, liver and heart.

The protein resides in the cell membrane. It is found in the lysosome membrane. Functionally, may be an inhibitor of SLC12A1. Seems to correspond to a subunit of a multimeric transport system and thus, additional subunits may be required for its function. May play a role in lysosomal ion flux and osmoregulation. The polypeptide is Solute carrier family 12 member 9 (SLC12A9) (Homo sapiens (Human)).